Consider the following 253-residue polypeptide: Prepilin leader peptidase/N-methyltransferase (253 aa).

Residues 4–24 (VYLILFSIVSLILGSFSNVVI) traverse the membrane as a helical segment. Residues C48, C51, C73, and C76 each contribute to the Zn(2+) site. The next 6 membrane-spanning stretches (helical) occupy residues 80 to 100 (ISLSYFIVELSFFIIAFPIYW), 106 to 126 (VDSFVLLGLYFILFNLFVIDF), 129 to 149 (MLLPNLLTYPIFMLAFIYVQQ), 159 to 179 (IIGGFAAFIISYVSNFIVRLF), 198 to 218 (TLIGVEFVPYLFLLSSIIAFI), and 230 to 250 (CLYIPLGPSIIISFVIVFFSI).

Belongs to the peptidase A24 family. Zn(2+) is required as a cofactor.

It localises to the cell inner membrane. It catalyses the reaction Typically cleaves a -Gly-|-Phe- bond to release an N-terminal, basic peptide of 5-8 residues from type IV prepilin, and then N-methylates the new N-terminal amino group, the methyl donor being S-adenosyl-L-methionine.. Functionally, plays an essential role in type IV pili and type II pseudopili formation by proteolytically removing the leader sequence from substrate proteins and subsequently monomethylating the alpha-amino group of the newly exposed N-terminal phenylalanine. The polypeptide is Prepilin leader peptidase/N-methyltransferase (tcpJ) (Vibrio cholerae serotype O1 (strain ATCC 39315 / El Tor Inaba N16961)).